We begin with the raw amino-acid sequence, 411 residues long: Methyl-CpG-binding domain protein 2 (411 aa).

The interval 1-149 (MRAHPGGGRC…GPRATESGKR (149 aa)) is required for interaction with DHX9 and PRMT5. The disordered stretch occupies residues 1–158 (MRAHPGGGRC…RMDCPALPPG (158 aa)). Residues 77 to 95 (GRGRGRGRGRGRGRGRGRG) are compositionally biased toward basic residues. Residues 98 to 121 (PSGGSGLGGDGGGCGGGGSGGGGA) are compositionally biased toward gly residues. In terms of domain architecture, MBD spans 145-213 (ESGKRMDCPA…SSFDFRTGKM (69 aa)). Serine 181 is subject to Phosphoserine. The segment at 214-241 (MPSKLQKNKQRLRNDPLNQNKGKPDLNT) is disordered. Residues 229–241 (PLNQNKGKPDLNT) show a composition bias toward polar residues. Serine 407 is modified (phosphoserine).

In terms of assembly, heterodimer with MBD3 (via N-terminus). Component of the MeCP1 complex that contains HDAC1 and HDAC2. Component of the nucleosome remodeling and deacetylase (NuRD) repressor complex, composed of core proteins MTA1, MTA2, MTA3, RBBP4, RBBP7, HDAC1, HDAC2, MBD2, MBD3, and peripherally associated proteins CDK2AP1, CDK2AP2, GATAD2A, GATAD2B, CHD3, CHD4 and CHD5. The exact stoichiometry of the NuRD complex is unknown, and some subunits such as MBD2 and MBD3, GATAD2A and GATAD2B, and CHD3, CHD4 and CHD5 define mutually exclusive NuRD complexes. Interacts with CDK2AP1. Interacts with DHX9. Interacts with DNMT1. Interacts with GATAD2A/p66-alpha. Interacts with GATAD2B/p66-beta. Interacts with GPN1. Interacts with MIZF. Interacts with PRMT5. Interacts with SIN3A. Interacts with SPHK2. Highly expressed in brain, heart, kidney, stomach, testis and placenta.

It localises to the nucleus. Its subcellular location is the chromosome. Its function is as follows. Binds CpG islands in promoters where the DNA is methylated at position 5 of cytosine within CpG dinucleotides. Binds hemimethylated DNA as well. Recruits histone deacetylases and DNA methyltransferases to chromatin. Acts as a component of the histone deacetylase NuRD complex which participates in the remodeling of chromatin. Acts as a transcriptional repressor and plays a role in gene silencing. Functions as a scaffold protein, targeting GATAD2A and GATAD2B to chromatin to promote repression. May enhance the activation of some unmethylated cAMP-responsive promoters. This Homo sapiens (Human) protein is Methyl-CpG-binding domain protein 2.